The primary structure comprises 211 residues: Urease accessory protein UreF (211 aa).

The tract at residues 71 to 93 (DDADRETDARTPAPAARHASRSQ) is disordered.

This sequence belongs to the UreF family. UreD, UreF and UreG form a complex that acts as a GTP-hydrolysis-dependent molecular chaperone, activating the urease apoprotein by helping to assemble the nickel containing metallocenter of UreC. The UreE protein probably delivers the nickel.

The protein resides in the cytoplasm. Functionally, required for maturation of urease via the functional incorporation of the urease nickel metallocenter. The protein is Urease accessory protein UreF of Mycobacterium tuberculosis (strain ATCC 25177 / H37Ra).